Consider the following 149-residue polypeptide: UPF0178 protein Sama_3557 (149 aa).

Belongs to the UPF0178 family.

The polypeptide is UPF0178 protein Sama_3557 (Shewanella amazonensis (strain ATCC BAA-1098 / SB2B)).